The chain runs to 423 residues: GTPase ERA-like, chloroplastic (423 aa).

The transit peptide at 1 to 60 (MELGLALRLVAPPPRLPCRALQPPPMPCFSPCAARRSRIRSSRLERRVGVVVSGGSMASL) directs the protein to the chloroplast. One can recognise an Era-type G domain in the interval 124 to 294 (RSGYVAVLGK…KEWILSKLPL (171 aa)). Positions 132–139 (GKPNVGKS) are G1. 132 to 139 (GKPNVGKS) is a binding site for GTP. Positions 158-162 (QTTRH) are G2. Positions 179–182 (DTPG) are G3. GTP is bound by residues 179-183 (DTPGV) and 244-247 (NKKD). The interval 244-247 (NKKD) is G4. The tract at residues 273-275 (ISA) is G5. One can recognise a KH type-2 domain in the interval 325 to 402 (YRQEIPYACQ…YLEIMVKVKE (78 aa)).

It belongs to the TRAFAC class TrmE-Era-EngA-EngB-Septin-like GTPase superfamily. Era GTPase family.

The protein resides in the plastid. It localises to the chloroplast stroma. Its subcellular location is the chloroplast nucleoid. Nuclear genome-encoded probable GTPase involved in ribosome biogenesis in chloroplasts. Plays a role in 16S rRNA maturation in plastids and may contribute to the assembly of the small (30S) ribosomal subunit. The protein is GTPase ERA-like, chloroplastic of Oryza sativa subsp. japonica (Rice).